Reading from the N-terminus, the 623-residue chain is Glutathione import ATP-binding protein GsiA (623 aa).

2 consecutive ABC transporter domains span residues 15-269 and 314-564; these read VENL…RALL and LRVR…RKLL. Residues 49–56 and 357–364 contribute to the ATP site; these read GESGSGKS.

Belongs to the ABC transporter superfamily. Glutathione importer (TC 3.A.1.5.11) family. As to quaternary structure, the complex is composed of two ATP-binding proteins (GsiA), two transmembrane proteins (GsiC and GsiD) and a solute-binding protein (GsiB).

Its subcellular location is the cell inner membrane. The enzyme catalyses glutathione(out) + ATP + H2O = glutathione(in) + ADP + phosphate + H(+). Inhibited by verapamil but not by carbonyl cyanide m-chlorophenylhydrazone (CCCP). Part of the ABC transporter complex GsiABCD involved in glutathione import. Responsible for energy coupling to the transport system. This is Glutathione import ATP-binding protein GsiA from Escherichia coli (strain K12).